The chain runs to 465 residues: Cysteine--tRNA ligase (465 aa).

C29 is a Zn(2+) binding site. The 'HIGH' region signature appears at 31 to 41; that stretch reads PTVYNYIHIGN. The Zn(2+) site is built by C209, H234, and E238. Residues 266-270 carry the 'KMSKS' region motif; the sequence is KMSKS. An ATP-binding site is contributed by K269. Phosphoserine is present on S270.

Belongs to the class-I aminoacyl-tRNA synthetase family. As to quaternary structure, monomer. It depends on Zn(2+) as a cofactor.

The protein resides in the cytoplasm. It catalyses the reaction tRNA(Cys) + L-cysteine + ATP = L-cysteinyl-tRNA(Cys) + AMP + diphosphate. The protein is Cysteine--tRNA ligase of Bacillus cereus (strain 03BB102).